The following is a 584-amino-acid chain: Pectinesterase 3 (584 aa).

An N-terminal signal peptide occupies residues 1–50 (MTRIKEFFTKLSESSTNQNISNIPKKKKKLFLALFATLLVVAAVIGIVAG). The propeptide occupies 51–266 (VNSRKNSGDN…LSTGDRRLLQ (216 aa)). 3 N-linked (GlcNAc...) asparagine glycosylation sites follow: Asn108, Asn129, and Asn226. Substrate-binding residues include Thr348 and Gln378. Asp401 serves as the catalytic Proton donor. Cys415 and Cys435 are oxidised to a cystine. The active-site Nucleophile is Asp422. Substrate-binding residues include Arg490 and Trp492.

The protein in the N-terminal section; belongs to the PMEI family. This sequence in the C-terminal section; belongs to the pectinesterase family. In the peel, expression is localized to the region of the flavedo close to the oil glands, and to the innermost layer of the albedo. In the lamella, expression is localized to the cell layers opposing the fruit tissue, and to the parenchyma surrounding the vascular tissue. In the fruit vesicles, expression is restricted to the peripheral cell layers and stalk cells. High levels of expression are detected in the core matrix.

The protein resides in the secreted. The protein localises to the cell wall. It catalyses the reaction [(1-&gt;4)-alpha-D-galacturonosyl methyl ester](n) + n H2O = [(1-&gt;4)-alpha-D-galacturonosyl](n) + n methanol + n H(+). It functions in the pathway glycan metabolism; pectin degradation; 2-dehydro-3-deoxy-D-gluconate from pectin: step 1/5. Its function is as follows. Acts in the modification of cell walls via demethylesterification of cell wall pectin. In Citrus sinensis (Sweet orange), this protein is Pectinesterase 3.